Reading from the N-terminus, the 258-residue chain is Imidazole glycerol phosphate synthase subunit HisF (258 aa).

Active-site residues include Asp11 and Asp130.

The protein belongs to the HisA/HisF family. In terms of assembly, heterodimer of HisH and HisF.

It localises to the cytoplasm. The catalysed reaction is 5-[(5-phospho-1-deoxy-D-ribulos-1-ylimino)methylamino]-1-(5-phospho-beta-D-ribosyl)imidazole-4-carboxamide + L-glutamine = D-erythro-1-(imidazol-4-yl)glycerol 3-phosphate + 5-amino-1-(5-phospho-beta-D-ribosyl)imidazole-4-carboxamide + L-glutamate + H(+). The protein operates within amino-acid biosynthesis; L-histidine biosynthesis; L-histidine from 5-phospho-alpha-D-ribose 1-diphosphate: step 5/9. Functionally, IGPS catalyzes the conversion of PRFAR and glutamine to IGP, AICAR and glutamate. The HisF subunit catalyzes the cyclization activity that produces IGP and AICAR from PRFAR using the ammonia provided by the HisH subunit. The chain is Imidazole glycerol phosphate synthase subunit HisF from Yersinia pseudotuberculosis serotype O:3 (strain YPIII).